The chain runs to 450 residues: Nicotinamide phosphoribosyltransferase (450 aa).

Arg210 provides a ligand contact to diphosphate. Residue Asp233 participates in beta-nicotinamide D-ribonucleotide binding. Diphosphate contacts are provided by His249 and Arg310. Residues 310–312 (RAD), 364–365 (GD), and Arg403 contribute to the beta-nicotinamide D-ribonucleotide site.

The protein belongs to the NAPRTase family.

The catalysed reaction is beta-nicotinamide D-ribonucleotide + diphosphate = 5-phospho-alpha-D-ribose 1-diphosphate + nicotinamide + H(+). It functions in the pathway cofactor biosynthesis; NAD(+) biosynthesis; nicotinamide D-ribonucleotide from 5-phospho-alpha-D-ribose 1-diphosphate and nicotinamide: step 1/1. Catalyzes the condensation of nicotinamide with 5-phosphoribosyl-1-pyrophosphate to yield nicotinamide mononucleotide, an intermediate in the biosynthesis of NAD. The protein is Nicotinamide phosphoribosyltransferase of Mycoplasma genitalium (strain ATCC 33530 / DSM 19775 / NCTC 10195 / G37) (Mycoplasmoides genitalium).